A 316-amino-acid polypeptide reads, in one-letter code: Transcription initiation factor IIB (316 aa).

The TFIIB-type zinc finger occupies 11–42; that stretch reads PKVTCPNHPDALLVEDYRAGDMICSECGLVVG. Residues Cys15, His18, Cys34, and Cys37 each contribute to the Zn(2+) site. 2 repeat units span residues 124-200 and 218-294.

It belongs to the TFIIB family.

The protein localises to the nucleus. The protein resides in the chromosome. The enzyme catalyses L-lysyl-[protein] + acetyl-CoA = N(6)-acetyl-L-lysyl-[protein] + CoA + H(+). General transcription factor that plays a role in transcription initiation by RNA polymerase II (Pol II). Involved in the pre-initiation complex (PIC) formation and Pol II recruitment at promoter DNA. Together with the TATA box-bound TBP forms the core initiation complex and provides a bridge between TBP and the Pol II-TFIIF complex. Released from the PIC early following the onset of transcription during the initiation and elongation transition and reassociates with TBP during the next transcription cycle. Associates with chromatin to core promoter-specific regions. Binds to two distinct DNA core promoter consensus sequence elements in a TBP-independent manner; these IIB-recognition elements (BREs) are localized immediately upstream (BREu), 5'-[GC][GC][GA]CGCC-3', and downstream (BREd), 5'-[GA]T[TGA][TG][GT][TG][TG]-3', of the TATA box element. Modulates transcription start site selection. Also exhibits autoacetyltransferase activity that contributes to the activated transcription. The polypeptide is Transcription initiation factor IIB (Xenopus laevis (African clawed frog)).